A 755-amino-acid chain; its full sequence is 1,4-alpha-glucan branching enzyme GlgB (755 aa).

The active-site Nucleophile is Asp-431. The Proton donor role is filled by Glu-484.

The protein belongs to the glycosyl hydrolase 13 family. GlgB subfamily. Monomer.

It catalyses the reaction Transfers a segment of a (1-&gt;4)-alpha-D-glucan chain to a primary hydroxy group in a similar glucan chain.. The protein operates within glycan biosynthesis; glycogen biosynthesis. Functionally, catalyzes the formation of the alpha-1,6-glucosidic linkages in glycogen by scission of a 1,4-alpha-linked oligosaccharide from growing alpha-1,4-glucan chains and the subsequent attachment of the oligosaccharide to the alpha-1,6 position. The polypeptide is 1,4-alpha-glucan branching enzyme GlgB (Prochlorococcus marinus (strain NATL1A)).